Reading from the N-terminus, the 238-residue chain is Large ribosomal subunit protein uL2 (238 aa).

A disordered region spans residues Gly203–Gly223.

It belongs to the universal ribosomal protein uL2 family. Part of the 50S ribosomal subunit. Forms a bridge to the 30S subunit in the 70S ribosome.

In terms of biological role, one of the primary rRNA binding proteins. Required for association of the 30S and 50S subunits to form the 70S ribosome, for tRNA binding and peptide bond formation. It has been suggested to have peptidyltransferase activity; this is somewhat controversial. Makes several contacts with the 16S rRNA in the 70S ribosome. This chain is Large ribosomal subunit protein uL2, found in Methanosarcina barkeri (strain Fusaro / DSM 804).